A 158-amino-acid chain; its full sequence is MTDNARARKLADRIQVVVAETLDRRIKDPRLGFVTITDARVTGDLREATVFYTVYGDDEERAASAAALESAKGVLRSEVGRQTGVRFTPTLAFVPDALPDNARTIEDLLDKARAKDAEVRQVSTGAQYAGDADPYRKPEDEDEETDGSSEKNEGPASA.

The disordered stretch occupies residues 114-158 (AKDAEVRQVSTGAQYAGDADPYRKPEDEDEETDGSSEKNEGPASA). The segment covering 148-158 (SSEKNEGPASA) has biased composition (basic and acidic residues).

It belongs to the RbfA family. In terms of assembly, monomer. Binds 30S ribosomal subunits, but not 50S ribosomal subunits or 70S ribosomes.

The protein resides in the cytoplasm. One of several proteins that assist in the late maturation steps of the functional core of the 30S ribosomal subunit. Associates with free 30S ribosomal subunits (but not with 30S subunits that are part of 70S ribosomes or polysomes). Required for efficient processing of 16S rRNA. May interact with the 5'-terminal helix region of 16S rRNA. This is Ribosome-binding factor A from Streptomyces griseus subsp. griseus (strain JCM 4626 / CBS 651.72 / NBRC 13350 / KCC S-0626 / ISP 5235).